The following is a 1610-amino-acid chain: Voltage-dependent L-type calcium channel subunit alpha-1D (1610 aa).

Residues 1 to 99 are disordered; the sequence is MMMMMMKKMQ…SKKQGNSSNS (99 aa). Over 1 to 125 the chain is Cytoplasmic; the sequence is MMMMMMKKMQ…RACISIVEWK (125 aa). Over residues 37–51 the composition is skewed to polar residues; that stretch reads GPTSQPNSSKQTVLS. Residues 53 to 66 are compositionally biased toward low complexity; sequence QAAIDAARQAKAAQ. Over residues 81 to 92 the composition is skewed to basic residues; sequence QRKRQQYAKSKK. The I repeat unit spans residues 112-408; sequence NPIRRACISI…LVLGVLSGEF (297 aa). The helical transmembrane segment at 126–144 threads the bilayer; sequence PFDIFILLAIFANCVALAI. At 145-162 the chain is on the extracellular side; it reads YIPFPEDDSNSTNHNLEK. A glycan (N-linked (GlcNAc...) asparagine) is linked at N154. Residues 163 to 182 traverse the membrane as a helical segment; it reads VEYAFLIIFTVETFLKIIAY. Residues 183–194 lie on the Cytoplasmic side of the membrane; the sequence is GLLLHPNAYVRN. A helical membrane pass occupies residues 195-213; sequence GWNLLDFVIVIVGLFSVIL. Residues 214–234 are Extracellular-facing; sequence EQLTKETEGGNHSSGKSGGFD. N-linked (GlcNAc...) asparagine glycosylation occurs at N224. A helical membrane pass occupies residues 235-253; sequence VKALRAFRVLRPLRLVSGV. Residues 254-272 lie on the Cytoplasmic side of the membrane; sequence PSLQVVLNSIIKAMVPLLH. A helical transmembrane segment spans residues 273 to 292; the sequence is IALLVLFVIIIYAIIGLELF. Residues 293–380 are Extracellular-facing; the sequence is IGKMHKTCFF…WMNDAMGFEL (88 aa). An N-linked (GlcNAc...) asparagine glycan is attached at N328. E363 is a Ca(2+) binding site. A helical membrane pass occupies residues 381–405; it reads PWVYFVSLVIFGSFFVLNLVLGVLS. The Cytoplasmic segment spans residues 406-522; it reads GEFSKEREKA…RRCRAAVKSV (117 aa). A binding to the beta subunit region spans residues 428 to 445; that stretch reads EQLEEDLKGYLDWITQAE. Residues 448 to 487 are disordered; the sequence is DPENEEEGGEEGKRNTSMPTSETESVNTENVSGEGETQGS. Polar residues predominate over residues 462-487; sequence NTSMPTSETESVNTENVSGEGETQGS. One copy of the II repeat lies at 508 to 754; the sequence is NRFNRRRCRA…VFLAIAVDNL (247 aa). A helical membrane pass occupies residues 523-542; the sequence is TFYWLVIVLVFLNTLTISSE. The Extracellular segment spans residues 543 to 557; the sequence is HYNQPDWLTQIQDIA. The chain crosses the membrane as a helical span at residues 558 to 576; the sequence is NKVLLALFTCEMLVKMYSL. The Cytoplasmic segment spans residues 577 to 584; the sequence is GLQAYFVS. The helical transmembrane segment at 585–603 threads the bilayer; the sequence is LFNRFDCFVVCGGITETIL. The Extracellular portion of the chain corresponds to 604-613; the sequence is VELELMSPLG. Residues 614 to 632 traverse the membrane as a helical segment; the sequence is VSVFRCVRLLRIFKVTRHW. Residues 633 to 651 lie on the Cytoplasmic side of the membrane; that stretch reads TSLSNLVASLLNSMKSIAS. Residues 652–672 form a helical membrane-spanning segment; sequence LLLLLFLFIIIFSLLGMQLFG. Topologically, residues 673–726 are extracellular; that stretch reads GKFNFDETQTKRSTFDNFPQALLTVFQILTGEDWNAVMYDGIMAYGGPSSSGMI. Residue E704 coordinates Ca(2+). The helical transmembrane segment at 727-751 threads the bilayer; the sequence is VCIYFIILFICGNYILLNVFLAIAV. Residues 752-884 lie on the Cytoplasmic side of the membrane; that stretch reads DNLADAESLN…VGCHKLINHH (133 aa). Basic and acidic residues predominate over residues 765–789; it reads KEEAEEKERKKIARKESLENKKNNK. Residues 765–846 form a disordered region; the sequence is KEEAEEKERK…VPAGPRPRRI (82 aa). Positions 790 to 801 are enriched in polar residues; it reads PEVNQIANSDNK. Acidic residues predominate over residues 824–836; that stretch reads VGEEEEEEEEEPE. One copy of the III repeat lies at 871-1153; that stretch reads NPIRVGCHKL…IFVGFVIVTF (283 aa). Residues 885–903 traverse the membrane as a helical segment; sequence IFTNLILVFIMLSSAALAA. Topologically, residues 904–919 are extracellular; sequence EDPIRSHSFRNTILGY. The chain crosses the membrane as a helical span at residues 920–939; the sequence is FDYAFTAIFTVEILLKMTTF. Residues 940–951 are Cytoplasmic-facing; that stretch reads GAFLHKGAFCRN. A helical membrane pass occupies residues 952–970; sequence YFNLLDMLVVGVSLVSFGI. Residues 971 to 976 lie on the Extracellular side of the membrane; sequence QSSAIS. A helical membrane pass occupies residues 977 to 996; sequence VVKILRVLRVLRPLRAINRA. Over 997–1015 the chain is Cytoplasmic; that stretch reads KGLKHVVQCVFVAIRTIGN. Residues 1016–1035 traverse the membrane as a helical segment; that stretch reads IMIVTTLLQFMFACIGVQLF. At 1036 to 1125 the chain is on the extracellular side; sequence KGKFYRCTDE…AGPVYNHRVE (90 aa). A dihydropyridine binding region spans residues 1073 to 1163; it reads RIWQNSDFNF…QEQGEKEYKN (91 aa). A Ca(2+)-binding site is contributed by E1099. A helical transmembrane segment spans residues 1126 to 1146; that stretch reads ISIFFIIYIIIVAFFMMNIFV. Residues 1147 to 1203 lie on the Cytoplasmic side of the membrane; that stretch reads GFVIVTFQEQGEKEYKNCELDKNQRQCVEYALKARPLRRYIPKNPYQYKFWYVVNSS. An IV repeat occupies 1190 to 1465; sequence NPYQYKFWYV…LFVAVIMDNF (276 aa). The chain crosses the membrane as a helical span at residues 1204-1222; sequence PFEYMMFVLIMLNTLCLAM. At 1223–1237 the chain is on the extracellular side; sequence QHYEQSKMFNDAMDI. The chain crosses the membrane as a helical span at residues 1238 to 1257; it reads LNMVFTGVFTVEMVLKVIAF. The Cytoplasmic segment spans residues 1258–1264; the sequence is KPKGYFS. A helical transmembrane segment spans residues 1265–1286; sequence DAWNTFDSLIVIGSIIDVALSE. The Extracellular segment spans residues 1287–1311; the sequence is ADPTESESLPLPTATPGNSEESNRI. The chain crosses the membrane as a helical span at residues 1312–1331; it reads SITFFRLFRVMRLVKLLSRG. Residues 1332–1350 lie on the Cytoplasmic side of the membrane; the sequence is EGIRTLLWTFIKSFQALPY. Residues 1351–1370 form a helical membrane-spanning segment; the sequence is VALLIAMLFFIYAVIGMQMF. The Extracellular segment spans residues 1371–1437; that stretch reads GKVAMRDNNQ…GEEYTCGSNF (67 aa). The segment at 1418–1484 is dihydropyridine binding; sequence LCDPDSDYNP…LGPHHLDEFK (67 aa). Positions 1430–1473 are phenylalkylamine binding; that stretch reads EYTCGSNFAIVYFISFYMLCAFLIINLFVAVIMDNFDYLTRDWS. Residues 1438–1462 form a helical membrane-spanning segment; it reads AIVYFISFYMLCAFLIINLFVAVIM. Residues 1463 to 1610 are Cytoplasmic-facing; it reads DNFDYLTRDW…CFLSPSRSRS (148 aa).

Belongs to the calcium channel alpha-1 subunit (TC 1.A.1.11) family. CACNA1D subfamily. In terms of assembly, voltage-dependent calcium channels are multisubunit complexes, consisting of alpha-1, alpha-2, beta and delta subunits in a 1:1:1:1 ratio. The channel activity is directed by the pore-forming and voltage-sensitive alpha-1 subunit. In many cases, this subunit is sufficient to generate voltage-sensitive calcium channel activity. The auxiliary subunits beta and alpha-2/delta linked by a disulfide bridge regulate the channel activity. Interacts with RIMBP2. Interacts with CABP1 and CABP4, resulting in a near elimination of calcium-dependent inactivation of the channel. As to expression, expressed in brain, heart and skeletal muscle.

The protein localises to the membrane. It catalyses the reaction Ca(2+)(in) = Ca(2+)(out). Functionally, voltage-sensitive calcium channels (VSCC) mediate the entry of calcium ions into excitable cells and are also involved in a variety of calcium-dependent processes, including muscle contraction, hormone or neurotransmitter release, gene expression, cell motility, cell division and cell death. The isoform alpha-1D gives rise to L-type calcium currents. Long-lasting (L-type) calcium channels belong to the 'high-voltage activated' (HVA) group. They are blocked by dihydropyridines (DHP), phenylalkylamines, and by benzothiazepines. This Mesocricetus auratus (Golden hamster) protein is Voltage-dependent L-type calcium channel subunit alpha-1D (CACNA1D).